The following is a 196-amino-acid chain: Nucleoid occlusion factor SlmA (196 aa).

One can recognise an HTH tetR-type domain in the interval 7-68 (SNRREEILQA…GLIEFIEEAL (62 aa)). Residues 31 to 50 (TTVKLAKQVGVSEAALYRHF) constitute a DNA-binding region (H-T-H motif). Residues 65-142 (EEALMSRINR…QLRQILRERK (78 aa)) adopt a coiled-coil conformation.

Belongs to the nucleoid occlusion factor SlmA family. In terms of assembly, homodimer. Interacts with FtsZ.

The protein resides in the cytoplasm. The protein localises to the nucleoid. In terms of biological role, required for nucleoid occlusion (NO) phenomenon, which prevents Z-ring formation and cell division over the nucleoid. Acts as a DNA-associated cell division inhibitor that binds simultaneously chromosomal DNA and FtsZ, and disrupts the assembly of FtsZ polymers. SlmA-DNA-binding sequences (SBS) are dispersed on non-Ter regions of the chromosome, preventing FtsZ polymerization at these regions. The polypeptide is Nucleoid occlusion factor SlmA (Vibrio atlanticus (strain LGP32) (Vibrio splendidus (strain Mel32))).